Consider the following 417-residue polypeptide: 4-hydroxy-3-methylbut-2-en-1-yl diphosphate synthase (flavodoxin) (417 aa).

The [4Fe-4S] cluster site is built by cysteine 304, cysteine 307, cysteine 350, and glutamate 357.

The protein belongs to the IspG family. It depends on [4Fe-4S] cluster as a cofactor.

It catalyses the reaction (2E)-4-hydroxy-3-methylbut-2-enyl diphosphate + oxidized [flavodoxin] + H2O + 2 H(+) = 2-C-methyl-D-erythritol 2,4-cyclic diphosphate + reduced [flavodoxin]. It functions in the pathway isoprenoid biosynthesis; isopentenyl diphosphate biosynthesis via DXP pathway; isopentenyl diphosphate from 1-deoxy-D-xylulose 5-phosphate: step 5/6. Functionally, converts 2C-methyl-D-erythritol 2,4-cyclodiphosphate (ME-2,4cPP) into 1-hydroxy-2-methyl-2-(E)-butenyl 4-diphosphate. The polypeptide is 4-hydroxy-3-methylbut-2-en-1-yl diphosphate synthase (flavodoxin) (Sinorhizobium medicae (strain WSM419) (Ensifer medicae)).